Reading from the N-terminus, the 129-residue chain is Large ribosomal subunit protein uL22 (129 aa).

This sequence belongs to the universal ribosomal protein uL22 family. Part of the 50S ribosomal subunit.

In terms of biological role, this protein binds specifically to 23S rRNA; its binding is stimulated by other ribosomal proteins, e.g. L4, L17, and L20. It is important during the early stages of 50S assembly. It makes multiple contacts with different domains of the 23S rRNA in the assembled 50S subunit and ribosome. The globular domain of the protein is located near the polypeptide exit tunnel on the outside of the subunit, while an extended beta-hairpin is found that lines the wall of the exit tunnel in the center of the 70S ribosome. In Phytoplasma sp. (strain STRAWB2), this protein is Large ribosomal subunit protein uL22.